Here is a 421-residue protein sequence, read N- to C-terminus: Gamma-glutamyl phosphate reductase (421 aa).

The protein belongs to the gamma-glutamyl phosphate reductase family.

The protein localises to the cytoplasm. The enzyme catalyses L-glutamate 5-semialdehyde + phosphate + NADP(+) = L-glutamyl 5-phosphate + NADPH + H(+). Its pathway is amino-acid biosynthesis; L-proline biosynthesis; L-glutamate 5-semialdehyde from L-glutamate: step 2/2. Its function is as follows. Catalyzes the NADPH-dependent reduction of L-glutamate 5-phosphate into L-glutamate 5-semialdehyde and phosphate. The product spontaneously undergoes cyclization to form 1-pyrroline-5-carboxylate. The chain is Gamma-glutamyl phosphate reductase from Nocardia farcinica (strain IFM 10152).